The following is a 1978-amino-acid chain: Protein MOR1 (1978 aa).

HEAT repeat units follow at residues 48–86 and 165–202; these read DPRL…AADS and IPPK…WIGK. Positions 230–264 are disordered; that stretch reads AGAKPTRKIRSEQDKEPEAEASSDVVGDGPSEEAV. Positions 238 to 247 are enriched in basic and acidic residues; it reads IRSEQDKEPE. 3 HEAT repeats span residues 322-359, 363-400, and 442-479; these read GDFS…GLRT, ASSR…AGCL, and KAHK…SVGM. Positions 501 to 587 are disordered; the sequence is IAGSGGGDQA…SVEPPEDVEP (87 aa). Over residues 510-527 the composition is skewed to low complexity; the sequence is AGTSSVTVQSSVGSTATG. Basic and acidic residues predominate over residues 565-577; it reads GKKDGSVRNEGSK. HEAT repeat units lie at residues 849–886, 890–928, 932–969, and 1008–1045; these read DIST…EANK, PTGT…AMGP, KASK…AVHL, and VDAI…VSGQ. Residues 1087–1115 are disordered; it reads SKGVTKISKSTSNGTLKQGNRSRAVPTKG. The segment covering 1093-1107 has biased composition (polar residues); sequence ISKSTSNGTLKQGNR. HEAT repeat units lie at residues 1230-1253, 1254-1286, 1287-1325, and 1328-1365; these read LKVL…MTEA, EAAI…QIIQ, AYSV…TCGT, and GGLL…ILGA. Basic and acidic residues predominate over residues 1393-1403; the sequence is MEKRREGKPGE. Positions 1393–1431 are disordered; that stretch reads MEKRREGKPGEARAALRRSVRDSGPEVAEQSGDISQTVP. One copy of the HEAT 14 repeat lies at 1535-1575; the sequence is RSCKYVLNTLMQTFQNKKLAHAVKEGTLESLITELLLWLLD. The segment at 1837-1862 is disordered; the sequence is AAAGRTPSSLPLSTPPPSSLALPSPD.

It belongs to the TOG/XMAP215 family. In terms of tissue distribution, expressed in roots, cotyledons, rosette leaves, stems, open flowers and green siliques.

The protein localises to the cytoplasm. It localises to the cytoskeleton. The protein resides in the phragmoplast. Its subcellular location is the spindle. Its function is as follows. Microtubule-binding protein that is essential for cortical microtubules organization and function. Essential for maintaining the interphase cortical array and for correct morphogenesis. Promotes rapid growth and shrinkage of microtubules and suppresses the pausing of interphase microtubules. Regulates the structure and function of microtubule arrays during mitosis and cytokinesis. Probably not required for cellulose microfibrils alignment in roots. The sequence is that of Protein MOR1 (MOR1) from Arabidopsis thaliana (Mouse-ear cress).